The following is a 710-amino-acid chain: Forkhead box protein P2 (710 aa).

Residues 1-28 (MMQESATETISNSSMNQNGMSTLSSQLD) show a composition bias toward polar residues. Disordered stretches follow at residues 1 to 44 (MMQE…SSEV) and 272 to 334 (HSQE…TGAS). A compositionally biased stretch (basic and acidic residues) spans 273–283 (SQEDNGIKHGG). A compositionally biased stretch (low complexity) spans 287–300 (TTNNSSSTTSSTTS). Residues 310–319 (SIVNGQSSVL) are compositionally biased toward polar residues. Over residues 321–332 (ARRDSSSHEETG) the composition is skewed to basic and acidic residues. A C2H2-type zinc finger spans residues 343–366 (CKWPGCESICEDFGQFLKHLNNEH). The leucine-zipper stretch occupies residues 383–404 (VQQLEIQLSKERERLQAMMTHL). The CTBP1-binding stretch occupies residues 417-421 (PLNLV). The segment covering 433–454 (TSPQSLPQTPTTPTAPVTPITQ) has biased composition (low complexity). Residues 433 to 460 (TSPQSLPQTPTTPTAPVTPITQGPSVIT) form a disordered region. Positions 499–589 (RPPFTYATLI…SQKITGSPTL (91 aa)) form a DNA-binding region, fork-head. 2 disordered regions span residues 644 to 663 (LDHI…QPHI) and 673 to 710 (VIAE…EDLE). The span at 694–710 (LEDDREIEEEPLSEDLE) shows a compositional bias: acidic residues.

Forms homodimers and heterodimers with FOXP1 and FOXP4. Dimerization is required for DNA-binding. Interacts with CTBP1. Interacts with FOXP1. Interacts with TBR1. Interacts with ZMYM2.

The protein localises to the nucleus. Transcriptional repressor that may play a role in the specification and differentiation of lung epithelium. May also play a role in developing neural, gastrointestinal and cardiovascular tissues. Can act with CTBP1 to synergistically repress transcription but CTPBP1 is not essential. Plays a role in synapse formation by regulating SRPX2 levels. This is Forkhead box protein P2 (Foxp2) from Rattus norvegicus (Rat).